The primary structure comprises 553 residues: Chaperonin GroEL (553 aa).

Residues 30-33, Lys51, 87-91, Gly416, and Asp496 each bind ATP; these read TLGP and DGTTT.

Belongs to the chaperonin (HSP60) family. Forms a cylinder of 14 subunits composed of two heptameric rings stacked back-to-back. Interacts with the co-chaperonin GroES.

It is found in the cytoplasm. It carries out the reaction ATP + H2O + a folded polypeptide = ADP + phosphate + an unfolded polypeptide.. Together with its co-chaperonin GroES, plays an essential role in assisting protein folding. The GroEL-GroES system forms a nano-cage that allows encapsulation of the non-native substrate proteins and provides a physical environment optimized to promote and accelerate protein folding. In Alkalilimnicola ehrlichii (strain ATCC BAA-1101 / DSM 17681 / MLHE-1), this protein is Chaperonin GroEL.